The sequence spans 405 residues: Glycosylated lysosomal membrane protein A (405 aa).

Positions 1–25 (MGCTRGWRLLLLLGLVCVGALQGRG) are cleaved as a signal peptide. At 26–365 (QEESREVSLQ…YGEPPRDSFS (340 aa)) the chain is on the lumenal side. Residues asparagine 55, asparagine 86, asparagine 125, asparagine 129, asparagine 143, asparagine 153, asparagine 157, asparagine 164, asparagine 169, asparagine 179, asparagine 206, asparagine 222, asparagine 267, asparagine 304, and asparagine 331 are each glycosylated (N-linked (GlcNAc...) asparagine). A helical transmembrane segment spans residues 366–386 (ILVICIMAVALGTPLLLLIVG). Over 387-405 (TLVVTALRHKVYSNYEPIN) the chain is Cytoplasmic. The Lysosomal targeting motif signature appears at 401 to 405 (YEPIN).

The protein belongs to the GLMP family. Interacts (via lumenal domain) with lysosomal protein MFSD1; the interaction starts while both proteins are still in the endoplasmic reticulum and is required for stabilization of MFSD1 in lysosomes but has no direct effect on its targeting to lysosomes or transporter activity.

The protein localises to the lysosome membrane. Its function is as follows. Required to protect lysosomal transporter MFSD1 from lysosomal proteolysis and for MFSD1 lysosomal localization. The polypeptide is Glycosylated lysosomal membrane protein A (glmp-a) (Xenopus laevis (African clawed frog)).